Consider the following 336-residue polypeptide: Phospho-N-acetylmuramoyl-pentapeptide-transferase (336 aa).

10 consecutive transmembrane segments (helical) span residues 3–23 (LTLI…PYFI), 53–73 (GGTV…LFSI), 78–98 (SLAL…IGFL), 118–138 (LALQ…PSGI), 143–163 (VFGY…FWVV), 174–194 (GIDG…GVIA), 200–220 (FDVL…FCFN), 226–246 (VFMG…ISIA), 251–271 (WTLL…MLQV), and 316–336 (AFLW…LYVF).

It belongs to the glycosyltransferase 4 family. MraY subfamily. Mg(2+) serves as cofactor.

Its subcellular location is the cell membrane. It catalyses the reaction UDP-N-acetyl-alpha-D-muramoyl-L-alanyl-gamma-D-glutamyl-L-lysyl-D-alanyl-D-alanine + di-trans,octa-cis-undecaprenyl phosphate = Mur2Ac(oyl-L-Ala-gamma-D-Glu-L-Lys-D-Ala-D-Ala)-di-trans,octa-cis-undecaprenyl diphosphate + UMP. It participates in cell wall biogenesis; peptidoglycan biosynthesis. Functionally, catalyzes the initial step of the lipid cycle reactions in the biosynthesis of the cell wall peptidoglycan: transfers peptidoglycan precursor phospho-MurNAc-pentapeptide from UDP-MurNAc-pentapeptide onto the lipid carrier undecaprenyl phosphate, yielding undecaprenyl-pyrophosphoryl-MurNAc-pentapeptide, known as lipid I. In Streptococcus pyogenes serotype M3 (strain ATCC BAA-595 / MGAS315), this protein is Phospho-N-acetylmuramoyl-pentapeptide-transferase.